A 337-amino-acid chain; its full sequence is Probable sulfurtransferase (337 aa).

Glycine 83 lines the ATP pocket. [4Fe-4S] cluster contacts are provided by cysteine 172 and cysteine 175. Residues lysine 179 and glycine 206 each coordinate ATP. Residue cysteine 284 participates in [4Fe-4S] cluster binding.

Belongs to the TtcA family. [4Fe-4S] cluster is required as a cofactor. Mg(2+) serves as cofactor.

This chain is Probable sulfurtransferase, found in Methanocaldococcus jannaschii (strain ATCC 43067 / DSM 2661 / JAL-1 / JCM 10045 / NBRC 100440) (Methanococcus jannaschii).